The sequence spans 181 residues: ATP-dependent protease subunit HslV (181 aa).

Threonine 7 is a catalytic residue. Na(+) contacts are provided by alanine 165, cysteine 168, and threonine 171.

Belongs to the peptidase T1B family. HslV subfamily. In terms of assembly, a double ring-shaped homohexamer of HslV is capped on each side by a ring-shaped HslU homohexamer. The assembly of the HslU/HslV complex is dependent on binding of ATP.

It localises to the cytoplasm. The catalysed reaction is ATP-dependent cleavage of peptide bonds with broad specificity.. Allosterically activated by HslU binding. Protease subunit of a proteasome-like degradation complex believed to be a general protein degrading machinery. The protein is ATP-dependent protease subunit HslV of Lysinibacillus sphaericus (strain C3-41).